The following is a 518-amino-acid chain: Serine--tRNA ligase, mitochondrial (518 aa).

The transit peptide at 1 to 34 (MAASIVRRLGPLVAGRGLRLRGGCVCNQSFKRSF) directs the protein to the mitochondrion. The residue at position 110 (Lys-110) is an N6-acetyllysine. At Lys-195 the chain carries N6-succinyllysine. 299–301 (TAE) contributes to the L-serine binding site. 330-332 (RAE) provides a ligand contact to ATP. N6-succinyllysine is present on Lys-337. Residue Val-345 coordinates ATP. An L-serine-binding site is contributed by Glu-352. Position 418–421 (418–421 (EVTS)) interacts with ATP. Thr-453 lines the L-serine pocket. Residues 497 to 518 (PLQYIGPNQPQKPRLPGQPASS) form a disordered region.

This sequence belongs to the class-II aminoacyl-tRNA synthetase family. Type-1 seryl-tRNA synthetase subfamily. Homodimer. The tRNA molecule probably binds across the dimer. In terms of processing, two N-termini starting at positions 35 and 37 have been identified by direct sequencing.

It is found in the mitochondrion matrix. It carries out the reaction tRNA(Ser) + L-serine + ATP = L-seryl-tRNA(Ser) + AMP + diphosphate + H(+). The catalysed reaction is tRNA(Sec) + L-serine + ATP = L-seryl-tRNA(Sec) + AMP + diphosphate + H(+). It functions in the pathway aminoacyl-tRNA biosynthesis; selenocysteinyl-tRNA(Sec) biosynthesis; L-seryl-tRNA(Sec) from L-serine and tRNA(Sec): step 1/1. Functionally, catalyzes the attachment of serine to tRNA(Ser). Is also probably able to aminoacylate tRNA(Sec) with serine, to form the misacylated tRNA L-seryl-tRNA(Sec), which will be further converted into selenocysteinyl-tRNA(Sec). The chain is Serine--tRNA ligase, mitochondrial (SARS2) from Bos taurus (Bovine).